We begin with the raw amino-acid sequence, 257 residues long: Thiazole synthase (257 aa).

Lys98 acts as the Schiff-base intermediate with DXP in catalysis. 1-deoxy-D-xylulose 5-phosphate is bound by residues Gly159, Ala185–Gly186, and Asn207–Thr208.

This sequence belongs to the ThiG family. In terms of assembly, homotetramer. Forms heterodimers with either ThiH or ThiS.

It is found in the cytoplasm. It carries out the reaction [ThiS sulfur-carrier protein]-C-terminal-Gly-aminoethanethioate + 2-iminoacetate + 1-deoxy-D-xylulose 5-phosphate = [ThiS sulfur-carrier protein]-C-terminal Gly-Gly + 2-[(2R,5Z)-2-carboxy-4-methylthiazol-5(2H)-ylidene]ethyl phosphate + 2 H2O + H(+). It participates in cofactor biosynthesis; thiamine diphosphate biosynthesis. Functionally, catalyzes the rearrangement of 1-deoxy-D-xylulose 5-phosphate (DXP) to produce the thiazole phosphate moiety of thiamine. Sulfur is provided by the thiocarboxylate moiety of the carrier protein ThiS. In vitro, sulfur can be provided by H(2)S. The protein is Thiazole synthase of Anaeromyxobacter dehalogenans (strain 2CP-C).